The following is a 419-amino-acid chain: Carboxypeptidase A1 (419 aa).

The signal sequence occupies residues 1–16 (MRGLLVLSVLLGAVFG). The propeptide at 17 to 110 (KEDFVGHQVL…QEQMFAFRSR (94 aa)) is activation peptide. A Peptidase M14 domain is found at 121 to 414 (TYHTLEEIYD…LALLTIMEHT (294 aa)). Zn(2+)-binding residues include His179 and Glu182. Residues 179-182 (HSRE), Arg237, and 254-255 (NR) each bind substrate. Cys248 and Cys271 are disulfide-bonded. His306 contacts Zn(2+). Substrate-binding positions include 307–308 (SY) and Tyr358. Glu380 acts as the Proton donor/acceptor in catalysis.

Belongs to the peptidase M14 family. In terms of assembly, monomer. May form a complex with proelastase 2. Zn(2+) serves as cofactor.

It localises to the secreted. It carries out the reaction Release of a C-terminal amino acid, but little or no action with -Asp, -Glu, -Arg, -Lys or -Pro.. The enzyme catalyses leukotriene C4 + H2O = leukotriene F4 + glycine. Inhibited by interaction with the S.magnifica carboxypeptidase inhibitor SmCI. In terms of biological role, carboxypeptidase that catalyzes the release of a C-terminal amino acid, but has little or no action with -Asp, -Glu, -Arg, -Lys or -Pro. Catalyzes the conversion of leukotriene C4 to leukotriene F4 via the hydrolysis of an amide bond. The chain is Carboxypeptidase A1 from Homo sapiens (Human).